We begin with the raw amino-acid sequence, 726 residues long: Sister chromatid cohesion protein SCC4 (726 aa).

TPR repeat units follow at residues 7-40 (AEGL…QISF), 88-121 (FQNY…ASSV), 132-165 (CNFN…ASHI), 229-262 (RLRL…IQQL), 443-477 (PTIL…CIEA), 531-564 (ASIL…AHNH), and 572-605 (AQYL…AKKL). The interval 697–726 (SVGIEGPSPAPSSSRLVGLDTGKRWGKRRM) is disordered.

Belongs to the SCC4/mau-2 family. In terms of assembly, interacts with SCC2 to form the cohesin loading complex. In terms of tissue distribution, expressed ubiquitously.

The protein resides in the nucleus. It localises to the cytoplasm. Functionally, essential protein required for cell fate determination during embryogenesis. Involved in sister chromatid cohesion. Forms a complex with SCC2, which is required for the association of the cohesin complex with chromosomes. This is Sister chromatid cohesion protein SCC4 from Arabidopsis thaliana (Mouse-ear cress).